Consider the following 48-residue polypeptide: Large ribosomal subunit protein bL32 (48 aa).

Positions 28 to 48 (VKDKDGSWKMPHRINKTTGEY) are disordered.

The protein belongs to the bacterial ribosomal protein bL32 family.

In Campylobacter concisus (strain 13826), this protein is Large ribosomal subunit protein bL32.